Reading from the N-terminus, the 344-residue chain is tRNA N6-adenosine threonylcarbamoyltransferase (344 aa).

Positions 111 and 115 each coordinate Fe cation. Substrate-binding positions include 134-138 (LVSGG), Asp167, Gly180, and Asn273. Asp301 lines the Fe cation pocket.

Belongs to the KAE1 / TsaD family. It depends on Fe(2+) as a cofactor.

It localises to the cytoplasm. The enzyme catalyses L-threonylcarbamoyladenylate + adenosine(37) in tRNA = N(6)-L-threonylcarbamoyladenosine(37) in tRNA + AMP + H(+). Its function is as follows. Required for the formation of a threonylcarbamoyl group on adenosine at position 37 (t(6)A37) in tRNAs that read codons beginning with adenine. Is involved in the transfer of the threonylcarbamoyl moiety of threonylcarbamoyl-AMP (TC-AMP) to the N6 group of A37, together with TsaE and TsaB. TsaD likely plays a direct catalytic role in this reaction. This is tRNA N6-adenosine threonylcarbamoyltransferase from Cupriavidus taiwanensis (strain DSM 17343 / BCRC 17206 / CCUG 44338 / CIP 107171 / LMG 19424 / R1) (Ralstonia taiwanensis (strain LMG 19424)).